A 204-amino-acid polypeptide reads, in one-letter code: Urease accessory protein UreG (204 aa).

12–19 contributes to the GTP binding site; the sequence is GPVGSGKT.

It belongs to the SIMIBI class G3E GTPase family. UreG subfamily. Homodimer. UreD, UreF and UreG form a complex that acts as a GTP-hydrolysis-dependent molecular chaperone, activating the urease apoprotein by helping to assemble the nickel containing metallocenter of UreC. The UreE protein probably delivers the nickel.

The protein localises to the cytoplasm. Facilitates the functional incorporation of the urease nickel metallocenter. This process requires GTP hydrolysis, probably effectuated by UreG. In Stutzerimonas stutzeri (strain A1501) (Pseudomonas stutzeri), this protein is Urease accessory protein UreG.